Reading from the N-terminus, the 91-residue chain is Transcription factor znf27 (91 aa).

Its subcellular location is the nucleus. Transcription factor; part of the gene cluster 27 that mediates the biosynthesis of asparasone A, a sclerotium-specific anthraquinone pigment important for sclerotial survival. Controls the expression of the non-reducing polyketide synthase (NRPKS) pks27. The polypeptide is Transcription factor znf27 (Aspergillus flavus (strain ATCC 200026 / FGSC A1120 / IAM 13836 / NRRL 3357 / JCM 12722 / SRRC 167)).